We begin with the raw amino-acid sequence, 501 residues long: Lysine--tRNA ligase (501 aa).

Residues glutamate 402 and glutamate 409 each contribute to the Mg(2+) site.

The protein belongs to the class-II aminoacyl-tRNA synthetase family. Homodimer. Mg(2+) serves as cofactor.

It localises to the cytoplasm. The enzyme catalyses tRNA(Lys) + L-lysine + ATP = L-lysyl-tRNA(Lys) + AMP + diphosphate. The protein is Lysine--tRNA ligase (lysS) of Helicobacter pylori (strain J99 / ATCC 700824) (Campylobacter pylori J99).